Here is a 389-residue protein sequence, read N- to C-terminus: Probable nitrate transporter NarT (389 aa).

Transmembrane regions (helical) follow at residues 14–34, 45–65, 69–89, 97–117, 139–159, 161–181, 211–231, 246–266, 268–288, 294–314, 331–351, and 353–373; these read TLSL…MPFI, ISII…PFGY, IVGA…PIFF, GMLM…SVGV, GNIG…IIGW, TTVR…FIFG, WYFI…NYLV, GVFI…GDKF, AVKV…ILGI, LFTV…GLIF, IVSM…TYVA, and LTGS…IALF.

The protein belongs to the major facilitator superfamily. Nitrate/nitrite porter (TC 2.A.1.8) family.

Its subcellular location is the cell membrane. In terms of biological role, probably required for nitrate uptake under anoxic conditions. Also possibly involved in excretion of nitrite produced by the dissimilatory reduction of nitrate. This Staphylococcus aureus (strain bovine RF122 / ET3-1) protein is Probable nitrate transporter NarT (narT).